The chain runs to 893 residues: Alanine--tRNA ligase (893 aa).

Residues His-574, His-578, Cys-678, and His-682 each coordinate Zn(2+).

The protein belongs to the class-II aminoacyl-tRNA synthetase family. Zn(2+) serves as cofactor.

It is found in the cytoplasm. It catalyses the reaction tRNA(Ala) + L-alanine + ATP = L-alanyl-tRNA(Ala) + AMP + diphosphate. Catalyzes the attachment of alanine to tRNA(Ala) in a two-step reaction: alanine is first activated by ATP to form Ala-AMP and then transferred to the acceptor end of tRNA(Ala). Also edits incorrectly charged Ser-tRNA(Ala) and Gly-tRNA(Ala) via its editing domain. The polypeptide is Alanine--tRNA ligase (Bifidobacterium longum (strain NCC 2705)).